The chain runs to 512 residues: ATP synthase subunit alpha (512 aa).

Gly169 to Thr176 contributes to the ATP binding site.

It belongs to the ATPase alpha/beta chains family. In terms of assembly, F-type ATPases have 2 components, CF(1) - the catalytic core - and CF(0) - the membrane proton channel. CF(1) has five subunits: alpha(3), beta(3), gamma(1), delta(1), epsilon(1). CF(0) has three main subunits: a(1), b(2) and c(9-12). The alpha and beta chains form an alternating ring which encloses part of the gamma chain. CF(1) is attached to CF(0) by a central stalk formed by the gamma and epsilon chains, while a peripheral stalk is formed by the delta and b chains.

It localises to the cell membrane. The catalysed reaction is ATP + H2O + 4 H(+)(in) = ADP + phosphate + 5 H(+)(out). Produces ATP from ADP in the presence of a proton gradient across the membrane. The alpha chain is a regulatory subunit. The protein is ATP synthase subunit alpha of Buchnera aphidicola subsp. Acyrthosiphon pisum (strain 5A).